Consider the following 275-residue polypeptide: Two-component response regulator PprB (275 aa).

The 119-residue stretch at 10–128 (SVLIIDDEPQ…ELLHGLERLE (119 aa)) folds into the Response regulatory domain. Aspartate 60 is subject to 4-aspartylphosphate. The interval 173–205 (SQPSALRSEDSQPSAPPAPVAESQVSPSNPLFG) is disordered. The HTH luxR-type domain occupies 200–265 (SNPLFGKLSP…QLALALSPAA (66 aa)). A DNA-binding region (H-T-H motif) is located at residues 224–243 (NYQIAYELGITENTVKLYVS).

Post-translationally, phosphorylated by PprA.

Member of the two-component regulatory system PprA/PprB involved in biofilm formation by controlling the expression of many related genes including type IVb pili major subunit flp pilin, adhesin bapA or cupE fimbriae. Functions as a transcription regulator by direct binding to promoter regions. Negatively regulates its own transcription. The polypeptide is Two-component response regulator PprB (Pseudomonas aeruginosa (strain ATCC 15692 / DSM 22644 / CIP 104116 / JCM 14847 / LMG 12228 / 1C / PRS 101 / PAO1)).